The sequence spans 260 residues: Hydroxyethylthiazole kinase 1 (260 aa).

Residue Met-39 participates in substrate binding. ATP contacts are provided by Arg-115 and Thr-160. Residue Gly-187 coordinates substrate.

It belongs to the Thz kinase family. It depends on Mg(2+) as a cofactor.

The enzyme catalyses 5-(2-hydroxyethyl)-4-methylthiazole + ATP = 4-methyl-5-(2-phosphooxyethyl)-thiazole + ADP + H(+). It participates in cofactor biosynthesis; thiamine diphosphate biosynthesis; 4-methyl-5-(2-phosphoethyl)-thiazole from 5-(2-hydroxyethyl)-4-methylthiazole: step 1/1. Functionally, catalyzes the phosphorylation of the hydroxyl group of 4-methyl-5-beta-hydroxyethylthiazole (THZ). In Streptococcus pneumoniae (strain Taiwan19F-14), this protein is Hydroxyethylthiazole kinase 1.